Consider the following 103-residue polypeptide: Large ribosomal subunit protein bL21 (103 aa).

The protein belongs to the bacterial ribosomal protein bL21 family. Part of the 50S ribosomal subunit. Contacts protein L20.

Functionally, this protein binds to 23S rRNA in the presence of protein L20. This is Large ribosomal subunit protein bL21 from Thiobacillus denitrificans (strain ATCC 25259 / T1).